Here is a 332-residue protein sequence, read N- to C-terminus: Probable xyloglucan endotransglucosylase/hydrolase protein 28 (332 aa).

Residues 1 to 22 (MGFITRFLVFMSLFTSLVSGFA) form the signal peptide. The region spanning 23-223 (LQKLPLIQFD…YKYAPYVSQF (201 aa)) is the GH16 domain. Residue Glu-108 is the Nucleophile of the active site. Glu-112 functions as the Proton donor in the catalytic mechanism. Xyloglucan-binding positions include Glu-112 and 125–127 (QTN). Residue Asn-131 is glycosylated (N-linked (GlcNAc...) asparagine). Residues 135–139 (HLGRE), 202–203 (KW), Gly-207, and Arg-282 each bind xyloglucan. A disulfide bridge connects residues Cys-277 and Cys-290. Residues 313–326 (HGHRRGKHRSRSRL) are compositionally biased toward basic residues. The interval 313 to 332 (HGHRRGKHRSRSRLARTESI) is disordered.

This sequence belongs to the glycosyl hydrolase 16 family. XTH group 3 subfamily. Contains at least one intrachain disulfide bond essential for its enzymatic activity. Expressed in 7 day old seedlings, roots, rosette leaves, internodes between nodes bearing axillary shoots, nodes bearing flowers, flower buds and siliques.

Its subcellular location is the secreted. The protein resides in the cell wall. It localises to the extracellular space. The protein localises to the apoplast. The catalysed reaction is breaks a beta-(1-&gt;4) bond in the backbone of a xyloglucan and transfers the xyloglucanyl segment on to O-4 of the non-reducing terminal glucose residue of an acceptor, which can be a xyloglucan or an oligosaccharide of xyloglucan.. In terms of biological role, catalyzes xyloglucan endohydrolysis (XEH) and/or endotransglycosylation (XET). Cleaves and religates xyloglucan polymers, an essential constituent of the primary cell wall, and thereby participates in cell wall construction of growing tissues. In Arabidopsis thaliana (Mouse-ear cress), this protein is Probable xyloglucan endotransglucosylase/hydrolase protein 28 (XTH28).